The sequence spans 880 residues: MKQLTGAQIRQMFLDFFQEKGHAVEPSASLVPHEDPSLLWINSGVATLKKYFDGRVIPQNPRITNAQKSIRTNDIENVGKTARHHTFFEMLGNFSIGDYFKEEAITWAWEFLTSDKWIGFDKELLSVTIHPEDEEAFTIWNEKMGVPKERIIRLEENFWDIGEGPSGPNTEIFYDRGEAYGNDFSDPELYPGGENERYLEVWNLVFSQFNHNPDGSYTPLPKKNIDTGMGLERMTSIVQDVPTNFDTDLFMPMIGATETISGEKYRNGDLEKDMAFKVIADHIRTVTFAVGDGALPSNEGRGYVLRRLLRRAVRYSKKLNINRPFMFELVPVVGEVMKDFYPEVLEKKDFIAKVVKNEEERFHETLHDGEAILAEVIAKAKEEKTTVISGVDAFRLYDTYGFPIELTEEYAEEAGMTVDQEGFENEMEKQRERARAARQDVDSMQVQGGVLGEVKVASEFVGYGTVATESNVVALVKNGEYTDSLQAGEEGQLMLNVTPFYAESGGQIADRGYLLADGVKVLVKDVQKAPNGQNLHKVVVEEGTLTKDAAVKAIIDTKNRGSVVKNHTATHLLHQALKDVLGTHVNQAGSLVTSERLRFDFSHFGQVQADELEKIERIVNEKIWESIDVEISQKAIEEAKEMGAMALFGEKYGDVVRVVQVGDYSLELCGGCHVDNTASIGIFKIVAESGIGAGTRRIEAVTGKSAYELMNDQVGLLKEAAGKMKTNPKDILTRVDGLFAEVKQLQKENESLAAKLSNIEAGNLTDSVMTVDGVNVLAAKVNVADMNNLRTMMDDLKNKLESAVVVLASVNDDKVNILAGVTKDLISQGYHAGKLVKEVASRCGGGGGGRPDMAQAGGKNPAQVEEALAFVQEYVKSVSK.

The Zn(2+) site is built by His567, His571, Cys669, and His673.

The protein belongs to the class-II aminoacyl-tRNA synthetase family. Requires Zn(2+) as cofactor.

Its subcellular location is the cytoplasm. It carries out the reaction tRNA(Ala) + L-alanine + ATP = L-alanyl-tRNA(Ala) + AMP + diphosphate. In terms of biological role, catalyzes the attachment of alanine to tRNA(Ala) in a two-step reaction: alanine is first activated by ATP to form Ala-AMP and then transferred to the acceptor end of tRNA(Ala). Also edits incorrectly charged Ser-tRNA(Ala) and Gly-tRNA(Ala) via its editing domain. This Bacillus thuringiensis subsp. konkukian (strain 97-27) protein is Alanine--tRNA ligase.